The chain runs to 384 residues: MPLRKENPLLSPVNGLLVDLPSPSNISYLWNFGSLLGLCLAMQIVTGCFLSMHYCAEVGLAFASVGQNSDVNYGFLLRYFHANGASLFFLCLYFHIGRSLYYGGYLKGPVWRVGIVIFLLTMATAFLGYVLPWGQMSFWGATVITNLLSAIPYVGTDVVQWVWGGFSVSGATLTRFFSLHFLFPFILAILVVVHLIFLHIEGSNSPVGSKTPVVDVVFHVYYTSKDWYGIVVTLMLLSIVVYLMPNLLGDPENFIQANSLVTPVHIQPEWYFLFAYAILRSIPNKFGGVVSMFLSILILFFFPLLHRSWLRGLPFRPFGRMAFWSFVVNFVLLTWIGSLVVEEPFIIIGQLVALYYFFYFLILIPLLGEVENNLLFKQRKKCDL.

4 helical membrane-spanning segments follow: residues 32–52 (FGSLLGLCLAMQIVTGCFLSM), 75–96 (FLLRYFHANGASLFFLCLYFHI), 111–131 (WRVGIVIFLLTMATAFLGYVL), and 176–196 (FFSLHFLFPFILAILVVVHLI). Heme b contacts are provided by His81 and His95. Heme b-binding residues include His180 and His194. His199 serves as a coordination point for a ubiquinone. The next 4 helical transmembrane spans lie at 224-244 (SKDWYGIVVTLMLLSIVVYLM), 286-306 (FGGVVSMFLSILILFFFPLLH), 318-338 (FGRMAFWSFVVNFVLLTWIGS), and 345-366 (FIIIGQLVALYYFFYFLILIPL).

Belongs to the cytochrome b family. In terms of assembly, the main subunits of complex b-c1 are: cytochrome b, cytochrome c1 and the Rieske protein. It depends on heme b as a cofactor.

It is found in the mitochondrion inner membrane. In terms of biological role, component of the ubiquinol-cytochrome c reductase complex (complex III or cytochrome b-c1 complex) that is part of the mitochondrial respiratory chain. The b-c1 complex mediates electron transfer from ubiquinol to cytochrome c. Contributes to the generation of a proton gradient across the mitochondrial membrane that is then used for ATP synthesis. This is Cytochrome b (MT-CYB) from Acropora tenuis (Purple tipped acropora).